Here is an 84-residue protein sequence, read N- to C-terminus: Subtilisin-chymotrypsin inhibitor-2A (84 aa).

A disordered region spans residues 1–23 (MSSVEKKPEGVNTGAGDRHNLKT).

This sequence belongs to the protease inhibitor I13 (potato type I serine protease inhibitor) family.

In terms of biological role, inhibits both subtilisin and chymotrypsin. This Hordeum vulgare (Barley) protein is Subtilisin-chymotrypsin inhibitor-2A.